A 499-amino-acid polypeptide reads, in one-letter code: Lysine--tRNA ligase (499 aa).

Mg(2+)-binding residues include Glu-410 and Glu-417.

It belongs to the class-II aminoacyl-tRNA synthetase family. In terms of assembly, homodimer. The cofactor is Mg(2+).

The protein localises to the cytoplasm. The enzyme catalyses tRNA(Lys) + L-lysine + ATP = L-lysyl-tRNA(Lys) + AMP + diphosphate. This chain is Lysine--tRNA ligase (lysS), found in Bacillus subtilis (strain 168).